Here is a 546-residue protein sequence, read N- to C-terminus: RuBisCO large subunit-binding protein subunit alpha, chloroplastic (546 aa).

The transit peptide at 1-6 directs the protein to the chloroplast; it reads RFSVRA. Position 50 is a phosphoserine (S50).

It belongs to the chaperonin (HSP60) family. As to quaternary structure, oligomer of probably six alpha and six beta subunits.

It is found in the plastid. The protein resides in the chloroplast. In terms of biological role, this protein binds RuBisCO small and large subunits and is implicated in the assembly of the enzyme oligomer. This chain is RuBisCO large subunit-binding protein subunit alpha, chloroplastic, found in Brassica napus (Rape).